The chain runs to 227 residues: Uridylate kinase (227 aa).

Residue 11–12 (GS) participates in ATP binding. G45 lines the UMP pocket. Positions 46 and 50 each coordinate ATP. UMP is bound by residues D67 and 114–120 (TEPGHTT). 3 residues coordinate ATP: T140, Y146, and D149.

Belongs to the UMP kinase family. Homohexamer.

It localises to the cytoplasm. It catalyses the reaction UMP + ATP = UDP + ADP. Its pathway is pyrimidine metabolism; CTP biosynthesis via de novo pathway; UDP from UMP (UMPK route): step 1/1. Its activity is regulated as follows. Inhibited by UTP. Its function is as follows. Catalyzes the reversible phosphorylation of UMP to UDP. The sequence is that of Uridylate kinase from Thermoplasma volcanium (strain ATCC 51530 / DSM 4299 / JCM 9571 / NBRC 15438 / GSS1).